The following is a 310-amino-acid chain: Elongation factor Ts (310 aa).

Residues 80 to 83 (TDFV) are involved in Mg(2+) ion dislocation from EF-Tu.

This sequence belongs to the EF-Ts family.

Its subcellular location is the cytoplasm. Functionally, associates with the EF-Tu.GDP complex and induces the exchange of GDP to GTP. It remains bound to the aminoacyl-tRNA.EF-Tu.GTP complex up to the GTP hydrolysis stage on the ribosome. The protein is Elongation factor Ts of Methylocella silvestris (strain DSM 15510 / CIP 108128 / LMG 27833 / NCIMB 13906 / BL2).